Here is a 795-residue protein sequence, read N- to C-terminus: Myosin light chain kinase 3 (795 aa).

A Phosphoserine modification is found at Ser155. 2 disordered regions span residues 236 to 257 (GPGQ…ASEN) and 305 to 328 (SSGP…GDAL). Ser351 and Ser432 each carry phosphoserine. A disordered region spans residues 367-452 (DQIPKGARPF…GPGRTEAGRL (86 aa)). Residues 491-746 (VSQHEVLGGG…ATQCLKHEWL (256 aa)) form the Protein kinase domain. ATP contacts are provided by residues 497–505 (LGGGRFGQV) and Lys520. Asp612 serves as the catalytic Proton acceptor.

It belongs to the protein kinase superfamily. CAMK Ser/Thr protein kinase family. It depends on Mg(2+) as a cofactor. Phosphorylated on serine residues. As to expression, restricted to cardiomyocytes (at protein level). Down-regulated in heart after experimental myocardial infarction at the protein level; no significant changes at the mRNA level.

It is found in the cytoplasm. The enzyme catalyses L-seryl-[myosin light chain] + ATP = O-phospho-L-seryl-[myosin light chain] + ADP + H(+). The catalysed reaction is L-threonyl-[myosin light chain] + ATP = O-phospho-L-threonyl-[myosin light chain] + ADP + H(+). Functionally, kinase that phosphorylates MYL2 in vitro. Has been proposed to be calmodulin-dependent, although MYL2 phosphorylation has also been observed in the presence or absence of calmodulin. Promotes sarcomere formation in cardiomyocytes and increases cardiomyocyte contractility. The chain is Myosin light chain kinase 3 (Mylk3) from Mus musculus (Mouse).